A 203-amino-acid polypeptide reads, in one-letter code: Holliday junction branch migration complex subunit RuvA (203 aa).

A domain I region spans residues 1–63; the sequence is MIFSVRGEVL…EDSMTLYGFS (63 aa). A domain II region spans residues 64–141; sequence DAENRDLFLA…GPVGASGLTV (78 aa). A flexible linker region spans residues 141-145; the sequence is VGTAA. The segment at 146 to 203 is domain III; sequence DGNAVRGSVVEALVGLGFAAKQAEEATDQVLDGELGKDGAVATSSALRAALSLLGKTR.

Belongs to the RuvA family. As to quaternary structure, homotetramer. Forms an RuvA(8)-RuvB(12)-Holliday junction (HJ) complex. HJ DNA is sandwiched between 2 RuvA tetramers; dsDNA enters through RuvA and exits via RuvB. An RuvB hexamer assembles on each DNA strand where it exits the tetramer. Each RuvB hexamer is contacted by two RuvA subunits (via domain III) on 2 adjacent RuvB subunits; this complex drives branch migration. In the full resolvosome a probable DNA-RuvA(4)-RuvB(12)-RuvC(2) complex forms which resolves the HJ.

Its subcellular location is the cytoplasm. Functionally, the RuvA-RuvB-RuvC complex processes Holliday junction (HJ) DNA during genetic recombination and DNA repair, while the RuvA-RuvB complex plays an important role in the rescue of blocked DNA replication forks via replication fork reversal (RFR). RuvA specifically binds to HJ cruciform DNA, conferring on it an open structure. The RuvB hexamer acts as an ATP-dependent pump, pulling dsDNA into and through the RuvAB complex. HJ branch migration allows RuvC to scan DNA until it finds its consensus sequence, where it cleaves and resolves the cruciform DNA. This is Holliday junction branch migration complex subunit RuvA from Mycobacterium leprae (strain Br4923).